The chain runs to 62 residues: Frontoxin III (62 aa).

4 cysteine pairs are disulfide-bonded: Cys3–Cys24, Cys17–Cys41, Cys43–Cys54, and Cys55–Cys60.

Expressed by the venom gland.

It localises to the secreted. Binds to muscle nicotinic acetylcholine receptor (nAChR) and inhibit acetylcholine from binding to the receptor, thereby impairing neuromuscular transmission. The polypeptide is Frontoxin III (Micrurus frontalis (Coral snake)).